We begin with the raw amino-acid sequence, 159 residues long: G-protein-signaling modulator 3 (159 aa).

A disordered region spans residues 1–54 (MEAERPQEEDGEQSLPQDDQGWPPVNATARPWRSAPPSPPPPGTRHTALGPRSG). Phosphoserine is present on residues Ser34, Ser38, Ser55, and Ser58. Positions 34–43 (SAPPSPPPPG) are enriched in pro residues. Residue Thr61 is modified to Phosphothreonine. The 23-residue stretch at 61 to 83 (TELLLDLVAEAQSRRLEEQRATF) folds into the GoLoco 1 domain. The interval 77–97 (EEQRATFHTPEAPPNLAPAPP) is disordered. Residues 87–97 (EAPPNLAPAPP) show a composition bias toward pro residues. GoLoco domains lie at 103-125 (KEQL…RSDP) and 131-154 (GQEL…RSRP).

It is found in the cytoplasm. Functionally, interacts with subunit of G(i) alpha proteins and regulates the activation of G(i) alpha proteins. This is G-protein-signaling modulator 3 (Gpsm3) from Mus musculus (Mouse).